Reading from the N-terminus, the 403-residue chain is 4-hydroxyphenylpyruvate dioxygenase (403 aa).

2 VOC domains span residues 25–169 (GYDH…LVER) and 201–359 (RIDH…LFTK). The Fe cation site is built by histidine 204, histidine 287, and glutamate 370.

This sequence belongs to the 4HPPD family. As to quaternary structure, homodimer. Fe cation is required as a cofactor.

The catalysed reaction is 3-(4-hydroxyphenyl)pyruvate + O2 = homogentisate + CO2. Its pathway is amino-acid degradation; L-phenylalanine degradation; acetoacetate and fumarate from L-phenylalanine: step 3/6. Functionally, 4-hydroxyphenylpyruvate dioxygenase; part of the L-tyrosine degradation gene cluster that mediates the biosynthesis of the brownish pigment pyomelanin as an alternative melanin. The 4-hydroxyphenylpyruvate dioxygenase hppD catalyzes the conversion of 4-hydroxyphenylpyruvate to homogentisic acid (HGA). The protein hmgX is crucial for this conversion and thus, probably functions as an accessory factor to mediate specific activity of hppD. The homogentisate 1,2-dioxygenase hmgA is then involved in the cleavage of the aromatic ring of HGA and its conversion to 4-maleylacetoacetate. When hmgA activity is lowered by the cell wall integrity (CWI) signaling pathway, HGA accumulates and leads to the production of pyomelanin through benzoquinone acetic acid after oxidation and polymerization. On the opposite, in non-stress conditions, both hppD and hmgA activities are balanced and HGA is degraded into 4-maleylacetoacetate. 4-maleylacetoacetate is further converted to 4-fumarylacetoacetate by the maleylacetoacetate isomerase maiA, which is degraded into fumarate and acetoacetate by the fumarylacetoacetase fahA. This Aspergillus fumigatus (strain ATCC MYA-4609 / CBS 101355 / FGSC A1100 / Af293) (Neosartorya fumigata) protein is 4-hydroxyphenylpyruvate dioxygenase.